The primary structure comprises 496 residues: MSTEHMEELNDQQIVRREKMAALREQGIDPFGKRFERTANSQELKDKYANLDKEQLHDKNETATIAGRLVTKRGKGKVGFAHLQDREGQIQIYVRKDAVGEENYEIFKKADLGDFLGVEGEVMRTDMGELSIKATHITHLSKALRPLPEKFHGLTDVETIYRKRYLDLISNRESFERFVTRSKIISEIRRYLDQKGFLEVETPVLHNEAGGAAARPFITHHNAQNIDMVLRIATELHLKRLIVGGMERVYEIGRIFRNEGMDATHNPEFTSIEVYQAYADFQDIMDLTEGIIQHAAKSVKGDGPVNYQGTEIKINEPFKRVHMVDAIREITGVDFWQDMTLEEAKAIAAEKKVPVEKHYTEVGHIINAFFEEFVEETLIQPTFVYGHPVAVSPLAKKNPEDQRFTDRFELFIMTKEYGNAFTELNDPIDQLSRFEAQAKAKELGDDEATGIDYDYIEALEYGMPPTGGLGIGIDRLCMLLTDTTTIRDVLLFPTMK.

Mg(2+) contacts are provided by Glu-409 and Glu-416.

It belongs to the class-II aminoacyl-tRNA synthetase family. Homodimer. Requires Mg(2+) as cofactor.

It is found in the cytoplasm. It carries out the reaction tRNA(Lys) + L-lysine + ATP = L-lysyl-tRNA(Lys) + AMP + diphosphate. The polypeptide is Lysine--tRNA ligase (Streptococcus pneumoniae serotype 19F (strain G54)).